The sequence spans 389 residues: MMNKLSKMEFAAQDKAVDLDALCQEIRERACAGEFDNQAYVSQDIIEKLKKIGVYRALVPKRFGGEEWSPRQFCELIETLSKADGSVGWVASFGMSPAYLGSLPEETLKELYQNGPDVVFAGGIFPPQPAEITDEGVVVRGRWKFSSGCMGADIVGVGISPLKNNEMQGLPRMAVMPANKAKIEMTWDTVGLKGTGSHDLVVEDVLVEKKWTFVRGEPSKLSEPFFKYPSLSLATQVLTVVGIGVAAAALEEFEKLAPGKASITGGSEIANRPVTQYEFAQADAEFQAAKSWFYQTMDIVWNEIIAGREATAEQISDMRLACTHAARVCAKVTRKMQMLAGMTAIYTNNPFSRFVNDTNVVTQHAFMGDATLQNAGLVSFGLKPAPGYL.

It belongs to the HpaH/HsaA monooxygenase family.

It catalyses the reaction (indol-3-yl)acetate + NADH + O2 + H(+) = 2-hydroxy-(1H-indol-3-yl)acetate + NAD(+) + H2O. It carries out the reaction indole + NADH + O2 + H(+) = indoxyl + NAD(+) + H2O. Functionally, involved in the degradation of the plant hormone indole-3-acetic acid (IAA). Catalyzes the first step of the pathway, the conversion of IAA to 2-hydroxy-IAA (2-OH-IAA). Can also convert indole to indoxyl, which spontaneously dimerizes in the presence of oxygen to form the blue pigment indigo. This chain is Indole-3-acetate monooxygenase, found in Acinetobacter baumannii (strain ATCC 19606 / DSM 30007 / JCM 6841 / CCUG 19606 / CIP 70.34 / NBRC 109757 / NCIMB 12457 / NCTC 12156 / 81).